The primary structure comprises 161 residues: Suppressor of kinetochore protein 1 (161 aa).

The segment at 102-161 (VLASNYLDIKPLLDTGCKTVANMIRGKSPEDIRKTFNIPNDFTPEEEEQIRKENEWAEDR) is interaction with the F-box domain of F-box proteins.

This sequence belongs to the SKP1 family. As to quaternary structure, essential component of the E3 ubiquitin ligase Skp1-Cullin-1-F-box (SCF) complex. Interacts with cul1, fbh1, mcs2, pip1, pof1, pof2, pof3, pof4, pof5, pof6, pof7, pof8, pof9, pof10, pof11, pof12, pof13, pof14, pop1, pop2 and tfb3. Forms a complex with pof6 and sip1. Component of the RAVE complex composed of rav1, rav2 and skp1.

The protein resides in the cytoplasm. It is found in the nucleus. Its function is as follows. Required for cig2 degradation in the G2 and M phases of the cell cycle. Together with pof6, essential for septum processing and cell separation. Involved in mitotic progression, essential for the execution of anaphase B; required for coordinated structural alterations of mitotic spindles and segregation of nuclear membrane structures at anaphase. Involved in the DNA damage checkpoint pathway and maintenance of genome integrity. Component of the RAVE complex which is required for stable assembly of the vacuolar ATPase complex V-ATPase. This is Suppressor of kinetochore protein 1 from Schizosaccharomyces pombe (strain 972 / ATCC 24843) (Fission yeast).